Here is a 422-residue protein sequence, read N- to C-terminus: MAFSSLLRSAASYTVAAPRPDFFSSPASDHSKVLSSLGFSRNLKPSRFSSGISSSLQNGNARSVQPIKATATEVPSAVRRSSSSGKTKVGINGFGRIGRLVLRIATSRDDIEVVAVNDPFIDAKYMAYMLKYDSTHGNFKGSINVIDDSTLEINGKKVNVVSKRDPSEIPWADLGADYVVESSGVFTTLSKAASHLKGGAKKVIISAPSADAPMFVVGVNEHTYQPNMDIVSNASCTTNCLAPLAKVVHEEFGILEGLMTTVHATTATQKTVDGPSMKDWRGGRGASQNIIPSSTGAAKAVGKVLPELNGKLTGMAFRVPTSNVSVVDLTCRLEKGASYEDVKAAIKHASEGPLKGILGYTDEDVVSNDFVGDSRSSIFDANAGIGLSKSFVKLVSWYDNEWGYSNRVLDLIEHMALVAASH.

A chloroplast-targeting transit peptide spans 1–69 (MAFSSLLRSA…NARSVQPIKA (69 aa)). Over residues 50–63 (SGISSSLQNGNARS) the composition is skewed to polar residues. Residues 50–84 (SGISSSLQNGNARSVQPIKATATEVPSAVRRSSSS) are disordered. N-acetylthreonine is present on threonine 70. NAD(+)-binding positions include 96–97 (RI), aspartate 118, and arginine 164. D-glyceraldehyde 3-phosphate-binding positions include 235–237 (SCT), threonine 266, 295–296 (TG), and arginine 318. Cysteine 236 functions as the Nucleophile in the catalytic mechanism. Asparagine 400 provides a ligand contact to NAD(+).

It belongs to the glyceraldehyde-3-phosphate dehydrogenase family. As to quaternary structure, homotetramer. Expressed in shoot and root vasculature, leaf veins and vascular tissue of flowers and siliques.

It localises to the plastid. It is found in the chloroplast stroma. The catalysed reaction is D-glyceraldehyde 3-phosphate + phosphate + NAD(+) = (2R)-3-phospho-glyceroyl phosphate + NADH + H(+). Functionally, involved in plastidial glycolytic pathway and plays a specific role in glycolytic energy production in non-green plastids and chloroplasts. Essential for breakdown of starch to form sucrose for export to non-photosynthetic tissues, and to generate primary metabolites for anabolic pathways such as fatty acid and amino acid synthesis. Plays an important role in plant development by providing substrates for the phosphorylated pathway of serine biosynthesis in roots. Plays a crucial role in pollen development. Functionally redundant with GAPCP2. This is Glyceraldehyde-3-phosphate dehydrogenase GAPCP1, chloroplastic (GAPCP1) from Arabidopsis thaliana (Mouse-ear cress).